The following is a 447-amino-acid chain: Chromosomal replication initiator protein DnaA (447 aa).

Residues 1–74 are domain I, interacts with DnaA modulators; it reads MPDVESFWHS…TGFKLTGAEV (74 aa). Residues 74 to 109 form a domain II region; the sequence is VMPHFVVADEKDAALAQELEEPAEEEVVFSEQSKKA. The segment at 110-326 is domain III, AAA+ region; sequence MLNPKYTFDT…GALVRVQAFA (217 aa). 4 residues coordinate ATP: Gly-154, Gly-156, Lys-157, and Thr-158. The segment at 327 to 447 is domain IV, binds dsDNA; it reads TINGEDITTS…VSEIKNLLNS (121 aa).

Belongs to the DnaA family. Oligomerizes as a right-handed, spiral filament on DNA at oriC.

Its subcellular location is the cytoplasm. In terms of biological role, plays an essential role in the initiation and regulation of chromosomal replication. ATP-DnaA binds to the origin of replication (oriC) to initiate formation of the DNA replication initiation complex once per cell cycle. Binds the DnaA box (a 9 base pair repeat at the origin) and separates the double-stranded (ds)DNA. Forms a right-handed helical filament on oriC DNA; dsDNA binds to the exterior of the filament while single-stranded (ss)DNA is stabiized in the filament's interior. The ATP-DnaA-oriC complex binds and stabilizes one strand of the AT-rich DNA unwinding element (DUE), permitting loading of DNA polymerase. After initiation quickly degrades to an ADP-DnaA complex that is not apt for DNA replication. Binds acidic phospholipids. Its function is as follows. Strand separation requires the DnaA boxes and adjacent DnaA-trio motifs as well as ATP. This is Chromosomal replication initiator protein DnaA from Enterococcus faecalis (strain ATCC 700802 / V583).